The sequence spans 379 residues: Guanine nucleotide-binding protein G(s) subunit alpha (379 aa).

The region spanning Ser38–Leu379 is the G-alpha domain. Residues Arg41 to Thr54 form a G1 motif region. Residues Gly46 to Ser53, Leu182 to Thr188, Asp207 to Gln211, Asn276 to Asp279, and Ala351 each bind GTP. Residues Ser53 and Thr188 each contribute to the Mg(2+) site. The segment at Asp180–Thr188 is G2 motif. A G3 motif region spans residues Phe203–Arg212. Positions Ile272 to Asp279 are G4 motif. The G5 motif stretch occupies residues Thr349–Thr354.

Belongs to the G-alpha family. G(s) subfamily. In terms of assembly, g proteins are composed of 3 units; alpha, beta and gamma. The alpha chain contains the guanine nucleotide binding site.

Guanine nucleotide-binding proteins (G proteins) are involved as modulators or transducers in various transmembrane signaling systems. The G(s) protein is involved in hormonal regulation of adenylate cyclase: it activates the cyclase in response to beta-adrenergic stimuli. This Schistosoma mansoni (Blood fluke) protein is Guanine nucleotide-binding protein G(s) subunit alpha.